The chain runs to 541 residues: Formimidoyltransferase-cyclodeaminase (541 aa).

The segment at 1–181 (MAKLVECVPN…GATVTGARTF (181 aa)) is formiminotransferase N-subdomain. The active-site For formimidoyltransferase activity is histidine 82. 163–172 (GPPAFVPQWG) serves as a coordination point for folate. The interval 182–326 (LIAYNINLLC…PRERIIEYLV (145 aa)) is formiminotransferase C-subdomain. The segment at 327-334 (QAGQEDKG) is linker. The cyclodeaminase/cyclohydrolase stretch occupies residues 335–541 (LVTKPLGAFV…VLALLEKREA (207 aa)). Aspartate 412 (for cyclodeaminase activity) is an active-site residue.

It in the C-terminal section; belongs to the cyclodeaminase/cyclohydrolase family. In the N-terminal section; belongs to the formiminotransferase family. As to quaternary structure, homooctamer, including four polyglutamate binding sites. The subunits are arranged as a tetramer of dimers, and form a planar ring-shaped structure.

It localises to the cytoplasm. Its subcellular location is the cytosol. The protein localises to the golgi apparatus. It is found in the cytoskeleton. The protein resides in the microtubule organizing center. It localises to the centrosome. Its subcellular location is the centriole. The catalysed reaction is 5-formimidoyltetrahydrofolate + L-glutamate = N-formimidoyl-L-glutamate + (6S)-5,6,7,8-tetrahydrofolate. It carries out the reaction 5-formimidoyltetrahydrofolate + 2 H(+) = (6R)-5,10-methenyltetrahydrofolate + NH4(+). The protein operates within amino-acid degradation; L-histidine degradation into L-glutamate; L-glutamate from N-formimidoyl-L-glutamate (transferase route): step 1/1. Folate-dependent enzyme, that displays both transferase and deaminase activity. Serves to channel one-carbon units from formiminoglutamate to the folate pool. Functionally, binds and promotes bundling of vimentin filaments originating from the Golgi. The chain is Formimidoyltransferase-cyclodeaminase (FTCD) from Gallus gallus (Chicken).